A 447-amino-acid polypeptide reads, in one-letter code: Phosphoglucosamine mutase (447 aa).

Serine 88 functions as the Phosphoserine intermediate in the catalytic mechanism. Mg(2+) contacts are provided by serine 88, aspartate 231, aspartate 233, and aspartate 235. Serine 88 carries the post-translational modification Phosphoserine.

This sequence belongs to the phosphohexose mutase family. The cofactor is Mg(2+). Activated by phosphorylation.

It carries out the reaction alpha-D-glucosamine 1-phosphate = D-glucosamine 6-phosphate. Catalyzes the conversion of glucosamine-6-phosphate to glucosamine-1-phosphate. This Methanococcus maripaludis (strain C5 / ATCC BAA-1333) protein is Phosphoglucosamine mutase.